The chain runs to 545 residues: Glucose-6-phosphate isomerase (545 aa).

Residue E351 is the Proton donor of the active site. Catalysis depends on residues H382 and K510.

The protein belongs to the GPI family.

It is found in the cytoplasm. The catalysed reaction is alpha-D-glucose 6-phosphate = beta-D-fructose 6-phosphate. Its pathway is carbohydrate biosynthesis; gluconeogenesis. It functions in the pathway carbohydrate degradation; glycolysis; D-glyceraldehyde 3-phosphate and glycerone phosphate from D-glucose: step 2/4. Its function is as follows. Catalyzes the reversible isomerization of glucose-6-phosphate to fructose-6-phosphate. This Shewanella sediminis (strain HAW-EB3) protein is Glucose-6-phosphate isomerase.